Reading from the N-terminus, the 205-residue chain is Protein phosphatase inhibitor 2 family member B (205 aa).

Positions 1–44 (MAASTASHRPIKGILKNKTSTTSSMVASAEQPRRSVDEELSKKS) are disordered. An N-acetylalanine modification is found at Ala2. Required for binding PPP1CC regions lie at residues 12–17 (KGILKN) and 43–55 (KSQKWDEINILAT). Residues 17–26 (NKTSTTSSMV) show a composition bias toward polar residues. Positions 31-44 (QPRRSVDEELSKKS) are enriched in basic and acidic residues. Ser44 bears the Phosphoserine mark. Thr89 and Thr92 each carry phosphothreonine. Positions 111–142 (EPKYRIQEQESSGEEDSDLSPEEREKKRQFEM) are disordered. 4 positions are modified to phosphoserine: Ser121, Ser122, Ser127, and Ser130. Residues 121-130 (SSGEEDSDLS) show a composition bias toward acidic residues. A compositionally biased stretch (basic and acidic residues) spans 131–142 (PEEREKKRQFEM). The tract at residues 147–150 (HYNE) is required for binding PPP1CC catalytic center, displacing metal ions and inhibition of PPP1CC catalytic activity. The segment at 163–205 (KDLHDDDEDEEMLETADGESMNTEESNQGSTPSDQQQNKLRSS) is disordered. Positions 167–179 (DDDEDEEMLETAD) are enriched in acidic residues. The segment covering 182-205 (SMNTEESNQGSTPSDQQQNKLRSS) has biased composition (polar residues).

This sequence belongs to the protein phosphatase inhibitor 2 family. Interacts with PPP1CC. Only detected in spermatozoa, both heads and tails.

Its function is as follows. Inhibitor of protein-phosphatase 1. The sequence is that of Protein phosphatase inhibitor 2 family member B from Homo sapiens (Human).